A 207-amino-acid polypeptide reads, in one-letter code: MLNKLTSLLKDAGISLTDHQKNQLIAYVNMLHKWNKAYNLTSVRDPNEMLVRHILDSIVVAPYLQGERFIDVGTGPGLPGIPLSIVRPEAHFTLLDSLGKRVRFLRQVQHELKLENIEPVQSRVEEFPSEPPFDGVISRAFASLNDMVSWCHHLPGEQGRFYALKGQMPEDEIALLPEEYQVESVVKLQVPALDGERHLVVIKANKI.

Residues G73, L78, 124 to 125, and R139 contribute to the S-adenosyl-L-methionine site; that span reads VE.

It belongs to the methyltransferase superfamily. RNA methyltransferase RsmG family.

The protein localises to the cytoplasm. It carries out the reaction guanosine(527) in 16S rRNA + S-adenosyl-L-methionine = N(7)-methylguanosine(527) in 16S rRNA + S-adenosyl-L-homocysteine. In terms of biological role, specifically methylates the N7 position of guanine in position 527 of 16S rRNA. The sequence is that of Ribosomal RNA small subunit methyltransferase G from Escherichia coli O17:K52:H18 (strain UMN026 / ExPEC).